The primary structure comprises 243 residues: MDPSAALHRRPAGGSLGAVSPALSGGQARRRKQPPRPADFKLQVIIIGSRGVGKTSLMERFTDDTFCEACKSTVGVDFKIKTVELRGKKIRLQIWDTAGQERFNSITSAYYRSAKGIILVYDITKKETFDDLPKWMKMIDKYASEDAELLLVGNKLDCETDREISRQQGEKFAQQITGMRFCEASAKDNFNVDEIFLKLVDDILKKMPLDVLRNELSNSILSLQPEPEIPPELPPPRPHVRCC.

The residue at position 1 (Met1) is an N-acetylmethionine. A disordered region spans residues 1 to 36; sequence MDPSAALHRRPAGGSLGAVSPALSGGQARRRKQPPR. 3 positions are modified to phosphoserine: Ser15, Ser20, and Ser24. GTP-binding residues include Gly51, Val52, Gly53, Lys54, Thr55, Ser72, and Thr73. Thr55 serves as a coordination point for Mg(2+). 2 short sequence motifs (switch) span residues 64–78 and 96–113; these read DTFC…GVDF and DTAG…YYRS. Residues Thr73 and Asp96 each contribute to the Mg(2+) site. Gly99 provides a ligand contact to GTP. A Phosphoserine; by LRRK2 modification is found at Ser105. Residues Asn154, Lys155, Asp157, Ser185, Ala186, and Lys187 each contribute to the GTP site. 2 S-geranylgeranyl cysteine lipidation sites follow: Cys242 and Cys243.

This sequence belongs to the small GTPase superfamily. Rab family. As to quaternary structure, interacts with RABIF and OPTN. Interacts with LRRK2; interaction facilitates phosphorylation of Ser-105. Interacts with GDI1, GDI2, CHM and CHML; these interactions are disrupted by phosphorylation on Ser-105. Interacts with RILPL1 and RILPL2; these interactions are dependent on phosphorylation of Ser-105. The cofactor is Mg(2+). In terms of processing, phosphorylation of Ser-105 in the switch II region by LRRK2 prevents the association of RAB regulatory proteins, including CHM, CHML and RAB GDP dissociation inhibitors GDI1 and GDI2. In terms of tissue distribution, ubiquitously expressed.

It is found in the recycling endosome membrane. The protein resides in the lysosome membrane. The protein localises to the golgi apparatus membrane. It localises to the cytoplasmic vesicle. Its subcellular location is the autophagosome. The enzyme catalyses GTP + H2O = GDP + phosphate + H(+). With respect to regulation, regulated by guanine nucleotide exchange factors (GEFs) including DENND3 which promote the exchange of bound GDP for free GTP. Regulated by GTPase activating proteins (GAPs) which increase the GTP hydrolysis activity. Inhibited by GDP dissociation inhibitors (GDIs). Functionally, the small GTPases Rab are key regulators of intracellular membrane trafficking, from the formation of transport vesicles to their fusion with membranes. Rabs cycle between an inactive GDP-bound form and an active GTP-bound form that is able to recruit to membranes different set of downstream effectors directly responsible for vesicle formation, movement, tethering and fusion. RAB12 may play a role in protein transport from recycling endosomes to lysosomes regulating, for instance, the degradation of the transferrin receptor. Involved in autophagy. The sequence is that of Ras-related protein Rab-12 from Mus musculus (Mouse).